The chain runs to 167 residues: DNA-directed RNA polymerase II subunit rpb-9 (167 aa).

Positions 28 to 49 (DDMYDQNGASPAPSQNEKPGKS) are disordered. The segment covering 34 to 44 (NGASPAPSQNE) has biased composition (polar residues). Positions 59, 62, 81, 84, 128, 131, 156, and 161 each coordinate Zn(2+). The C4-type zinc-finger motif lies at 59 to 84 (CPECNNMLYPREDKESRVLMYSCRNC). Residues 124–166 (EEHQCPVCGKSKAVFFQAQTKKAEEEMRLYYVCASQDCQHRWT) form a TFIIS-type zinc finger.

Belongs to the archaeal RpoM/eukaryotic RPA12/RPB9/RPC11 RNA polymerase family. As to quaternary structure, component of the RNA polymerase II (Pol II) complex consisting of 12 subunits. In terms of tissue distribution, expressed in the soma and in the germline.

It localises to the nucleus. The protein resides in the nucleolus. DNA-dependent RNA polymerase catalyzes the transcription of DNA into RNA using the four ribonucleoside triphosphates as substrates. Component of RNA polymerase II which synthesizes mRNA precursors and many functional non-coding RNAs. Pol II is the central component of the basal RNA polymerase II transcription machinery. It is composed of mobile elements that move relative to each other. RPB9 is part of the upper jaw surrounding the central large cleft and thought to grab the incoming DNA template. Recruits ints-6, a component of the Integrator complex to PIWI-interacting RNA (piRNA) genes, to mediate Integrator complex-dependent cleavage of 3' ends of nascent transcripts upon RNA Pol II backtracking to terminate transcription and generate piRNA precursors. Promotes the biogenesis of secondary 22G-siRNAs (a class of 22 nucleotide siRNAs that possess a triphosphorylated guanine residue at the 5'-end). Involved in gene silencing mediated by a class of 21 nucleotide piRNAs that possess a uracil residue at the 5'-end (also called 21U-RNAs) and guide the Piwi protein prg-1 to its DNA targets for silencing. Plays a role in small RNA-directed transgenerational epigenetic inheritance (also called RNAe) over several generations. Not required for the transgenerational inheritance of exogenous small interfering RNAs (RNAi). May play a role in the silencing of the DNA transposable elements from the DNA transposon families, Chapaev-2 and CEMUDR1. The sequence is that of DNA-directed RNA polymerase II subunit rpb-9 from Caenorhabditis elegans.